The sequence spans 237 residues: Chaplin-B (237 aa).

The first 26 residues, 1 to 26 (MRRVTRNGVLAVAASGALAVTMPAYA), serve as a signal peptide directing secretion. The region spanning 42-82 (SPGLISGNTVQLPVDVPVDVCGNTVNVVGLLNPAAGNGCAD) is the Chaplin 1 domain. 2 disordered regions span residues 81-127 (ADSG…LSGN) and 148-216 (GIGN…TLAG). Over residues 101 to 115 (GSATEATSGGAAAEG) the composition is skewed to low complexity. Residues 120-160 (SPGVLSGNGVQLPVHLPVNVSGNSVNVVGIGNPAVGNESTN) enclose the Chaplin 2 domain. Residues 169 to 178 (VRPPAEPEPS) show a composition bias toward pro residues. The LPXTG sorting signal motif lies at 202-206 (LAHTG). Position 205 is a pentaglycyl murein peptidoglycan amidated threonine (Thr205). A propeptide spans 206-237 (GTDRTLPTLAGGAALVLGGTVLYRRFRPGSGD) (removed by sortase).

It belongs to the chaplin family. Long chaplin subfamily.

It localises to the secreted. The protein resides in the cell wall. Functionally, one of 8 partially redundant surface-active proteins required for efficient formation of aerial mycelium; the short chaplins assemble into a hydrophobic, amyloidal fibrillar surface layer that envelopes and protects aerial hyphae and spores, presumably anchored to the long chaplins. Chaplins have an overlapping function with the surface-active SapB peptide; chaplins are essential on minimal medium while on rich medium both chaplins and SapB are required for efficient aerial hyphae formation. The long chaplins (ChpA, ChpB, ChpC) are not absolutely necessary for short chaplin localization or rodlet formation, but probably play a role in initiating aerial hyphae development. Chaplins are also involved in cell attachment to a hydrophobic surface. This Streptomyces coelicolor (strain ATCC BAA-471 / A3(2) / M145) protein is Chaplin-B.